We begin with the raw amino-acid sequence, 330 residues long: Aspartate--ammonia ligase (330 aa).

This sequence belongs to the class-II aminoacyl-tRNA synthetase family. AsnA subfamily.

It localises to the cytoplasm. It carries out the reaction L-aspartate + NH4(+) + ATP = L-asparagine + AMP + diphosphate + H(+). It functions in the pathway amino-acid biosynthesis; L-asparagine biosynthesis; L-asparagine from L-aspartate (ammonia route): step 1/1. The protein is Aspartate--ammonia ligase of Streptococcus pyogenes serotype M2 (strain MGAS10270).